Consider the following 164-residue polypeptide: Lipoprotein signal peptidase (164 aa).

The next 4 helical transmembrane spans lie at 2–22, 40–60, 70–90, and 99–119; these read MSLL…AIVL, VVIT…AFSF, WLFS…MAKA, and LAYS…VVYG. Catalysis depends on residues D123 and D142. A helical membrane pass occupies residues 138–158; that stretch reads FNVADMAISCGAVFIILDGFI.

The protein belongs to the peptidase A8 family.

The protein localises to the cell inner membrane. It catalyses the reaction Release of signal peptides from bacterial membrane prolipoproteins. Hydrolyzes -Xaa-Yaa-Zaa-|-(S,diacylglyceryl)Cys-, in which Xaa is hydrophobic (preferably Leu), and Yaa (Ala or Ser) and Zaa (Gly or Ala) have small, neutral side chains.. It participates in protein modification; lipoprotein biosynthesis (signal peptide cleavage). Functionally, this protein specifically catalyzes the removal of signal peptides from prolipoproteins. This Tolumonas auensis (strain DSM 9187 / NBRC 110442 / TA 4) protein is Lipoprotein signal peptidase.